Here is a 426-residue protein sequence, read N- to C-terminus: Trigger factor (426 aa).

One can recognise a PPIase FKBP-type domain in the interval 166–249 (GDIVTFDFKG…IIEVKARELP (84 aa)).

It belongs to the FKBP-type PPIase family. Tig subfamily.

The protein resides in the cytoplasm. The catalysed reaction is [protein]-peptidylproline (omega=180) = [protein]-peptidylproline (omega=0). Functionally, involved in protein export. Acts as a chaperone by maintaining the newly synthesized protein in an open conformation. Functions as a peptidyl-prolyl cis-trans isomerase. The chain is Trigger factor from Mesoplasma florum (strain ATCC 33453 / NBRC 100688 / NCTC 11704 / L1) (Acholeplasma florum).